Consider the following 251-residue polypeptide: MRTPLIAGNWKLHKTIAESLAMVDELKPLVAGSRGVEIVVAPVFTALKSVSFALNGSDIGLAAQDCFWEEQGAFTGEVSPAQLRDAGCSHVIIGHSERRQLFGETDEGVNRKARAAVAVGLTAIICVGETMEERESRATFTVVGRQVTAALAGFLSHEFSRIVIAYEPVWAIGTGKTATDQQAQEVHCYIRNLVTMSISQAIADSLRILYGGSVKPDNIRGLMAQPDIDGALIGGASLKAASFAEMVNFRG.

9 to 11 (NWK) contacts substrate. The active-site Electrophile is His95. Catalysis depends on Glu167, which acts as the Proton acceptor. Substrate-binding positions include Gly173, Ser213, and 234-235 (GG).

It belongs to the triosephosphate isomerase family. Homodimer.

It localises to the cytoplasm. It catalyses the reaction D-glyceraldehyde 3-phosphate = dihydroxyacetone phosphate. It participates in carbohydrate biosynthesis; gluconeogenesis. It functions in the pathway carbohydrate degradation; glycolysis; D-glyceraldehyde 3-phosphate from glycerone phosphate: step 1/1. In terms of biological role, involved in the gluconeogenesis. Catalyzes stereospecifically the conversion of dihydroxyacetone phosphate (DHAP) to D-glyceraldehyde-3-phosphate (G3P). The sequence is that of Triosephosphate isomerase from Pelobacter propionicus (strain DSM 2379 / NBRC 103807 / OttBd1).